The chain runs to 727 residues: Protein edg-1 (727 aa).

A disordered region spans residues 703–727 (FAESSVKPTTSSAYGNSSNFSRYAD).

In terms of assembly, may interact with deps-1 and prg-1.

The protein resides in the cytoplasmic granule. Its function is as follows. Plays a role in regulating deps-1 cluster formation in the germline. The sequence is that of Protein edg-1 from Caenorhabditis elegans.